The sequence spans 245 residues: Thiopurine S-methyltransferase (245 aa).

Serine 14 bears the Phosphoserine mark. 29 to 40 is an S-adenosyl-L-methionine binding site; sequence WREKWVDGKIGF. Phenylalanine 40 contacts substrate. Lysine 58 bears the N6-acetyllysine mark. Leucine 69, glutamate 90, and arginine 152 together coordinate S-adenosyl-L-methionine.

The protein belongs to the class I-like SAM-binding methyltransferase superfamily. TPMT family. In terms of assembly, monomer.

Its subcellular location is the cytoplasm. It catalyses the reaction S-adenosyl-L-methionine + a thiopurine = S-adenosyl-L-homocysteine + a thiopurine S-methylether.. This Panthera tigris (Tiger) protein is Thiopurine S-methyltransferase (TPMT).